The following is a 77-amino-acid chain: U8-lycotoxin-Ls1t (77 aa).

Residues 1–20 (MKLIIFTGLVPFAIVSLIEA) form the signal peptide. The propeptide occupies 21 to 26 (QAENEK).

This sequence belongs to the neurotoxin 19 (CSTX) family. 08 (U8-Lctx) subfamily. Post-translationally, contains 4 disulfide bonds. Expressed by the venom gland.

Its subcellular location is the secreted. In Lycosa singoriensis (Wolf spider), this protein is U8-lycotoxin-Ls1t.